A 514-amino-acid polypeptide reads, in one-letter code: Acetylcholine receptor subunit gamma (514 aa).

An N-terminal signal peptide occupies residues 1–22 (MRCSDLLLLFLLALCVLPGISC). Over 23–241 (RNQEEKLLQD…VIFYLIIQRK (219 aa)) the chain is Extracellular. Cys-150 and Cys-164 are oxidised to a cystine. The N-linked (GlcNAc...) asparagine glycan is linked to Asn-163. 3 helical membrane passes run 242-266 (PLFY…VYFL), 275-293 (CTVS…FLIA), and 309-330 (YLTF…VLNV). The Cytoplasmic portion of the chain corresponds to 331–473 (SLRTPNTHSM…WILVGRVIDR (143 aa)). Tyr-386 is subject to Phosphotyrosine; by Tyr-kinases. The chain crosses the membrane as a helical span at residues 474–494 (VCFFIMASLFVCGTIGIFLMA).

Belongs to the ligand-gated ion channel (TC 1.A.9) family. Acetylcholine receptor (TC 1.A.9.1) subfamily. Gamma/CHRNG sub-subfamily. As to quaternary structure, pentamer of two alpha chains, and one each of the beta, delta, and gamma chains.

The protein localises to the postsynaptic cell membrane. The protein resides in the cell membrane. It catalyses the reaction K(+)(in) = K(+)(out). It carries out the reaction Na(+)(in) = Na(+)(out). In terms of biological role, after binding acetylcholine, the AChR responds by an extensive change in conformation that affects all subunits and leads to opening of an ion-conducting channel across the plasma membrane. The chain is Acetylcholine receptor subunit gamma (CHRNG) from Gallus gallus (Chicken).